The sequence spans 87 residues: Acyl-CoA-binding protein (87 aa).

Ser2 bears the N-acetylserine mark. In terms of domain architecture, ACB spans 2-87 (SQADFDKAAE…VEELKKKYGI (86 aa)). An N6-acetyllysine; alternate modification is found at Lys8. Position 8 is an N6-succinyllysine; alternate (Lys8). Lys14 serves as a coordination point for an acyl-CoA. Lys17 is modified (N6-succinyllysine). At Tyr29 the chain carries Phosphotyrosine. Residues 29-33 (YSHFK), Lys51, Lys55, and Tyr74 each bind an acyl-CoA. Lys51 carries the N6-acetyllysine modification. Lys55 bears the N6-acetyllysine; alternate mark. At Lys55 the chain carries N6-succinyllysine; alternate. Lys55 carries the post-translational modification N6-(2-hydroxyisobutyryl)lysine; alternate. Lys55 carries the post-translational modification N6-malonyllysine; alternate. The residue at position 77 (Lys77) is an N6-acetyllysine; alternate. Residue Lys77 is modified to N6-succinyllysine; alternate.

The protein belongs to the ACBP family. Monomer.

The protein localises to the endoplasmic reticulum. The protein resides in the golgi apparatus. Functionally, binds medium- and long-chain acyl-CoA esters with very high affinity and may function as an intracellular carrier of acyl-CoA esters. It is also able to displace diazepam from the benzodiazepine (BZD) recognition site located on the GABA type A receptor. It is therefore possible that this protein also acts as a neuropeptide to modulate the action of the GABA receptor. This chain is Acyl-CoA-binding protein (Dbi), found in Rattus norvegicus (Rat).